Here is an 84-residue protein sequence, read N- to C-terminus: Defensin-like protein 172 (84 aa).

A signal peptide spans 1–23; the sequence is MAKASSTLVLSIIFLVMFALVEQ. 4 disulfide bridges follow: C27/C74, C34/C56, C40/C68, and C44/C70.

This sequence belongs to the DEFL family.

Its subcellular location is the secreted. This Arabidopsis thaliana (Mouse-ear cress) protein is Defensin-like protein 172 (LCR60).